The sequence spans 397 residues: MALLRGVFIVAAKRTPFGAYGGLLKDFTPTDMAEFAARAALSAGRVSPETVDSVVVGNVMQSSSDAIYLARHVGLRVGIPKETPAITINRLCGSGFQSIVSGCQEICSRDSEVVLCGGTESMSQAPYCVRNIRFGTKLGSELKLEDTLWTGLTDTHVQMPMAITAENLAVKHQISREDCDRYALQSQQRWKTANDAGYFDNEMAPVEVKTRKGKQTMQVDEHPRPQTTMEQLNKLPPVFKKEGTVTAGNASGVSDGAGAVIIASEDAVKKHNFTPLARIVGYFVSGCDPTIMGIGPVPAISGALKKTGLSLKDMDLVEVNEAFAPQYLAVEKSLNLDPSKTNVNGGAIALGHPLAGSGSRITAHLVHELRRRGGKYAVGSACIGGGQGIAVIIENTA.

Residues Met1–Pro16 constitute a mitochondrion; not cleaved transit peptide. The residue at position 25 (Lys25) is an N6-acetyllysine; alternate. Lys25 bears the N6-succinyllysine; alternate mark. Cys92 acts as the Acyl-thioester intermediate in catalysis. Residue Thr119 is modified to Phosphothreonine. Position 121 is a phosphoserine (Ser121). At Tyr127 the chain carries Phosphotyrosine. At Thr136 the chain carries Phosphothreonine. At Lys137 the chain carries N6-acetyllysine; alternate. Residue Lys137 is modified to N6-succinyllysine; alternate. Ser140 carries the post-translational modification Phosphoserine. N6-acetyllysine; alternate occurs at positions 143, 171, 191, and 209. Residues Lys143, Lys171, Lys191, and Lys209 each carry the N6-succinyllysine; alternate modification. 2 positions are modified to N6-succinyllysine: Lys212 and Lys214. CoA-binding residues include Arg224 and Thr227. Lys234 bears the N6-acetyllysine; alternate mark. Lys234 carries the post-translational modification N6-succinyllysine; alternate. An N6-succinyllysine modification is found at Lys240. Lys241 carries the N6-acetyllysine modification. Ser251 is a binding site for CoA. Residues Lys269 and Lys270 each carry the N6-acetyllysine modification. Lys305 carries the N6-acetyllysine; alternate modification. The residue at position 305 (Lys305) is an N6-succinyllysine; alternate. Phosphoserine is present on Ser310. Lys312 is modified (N6-acetyllysine; alternate). The residue at position 312 (Lys312) is an N6-succinyllysine; alternate. A Phosphoserine modification is found at Ser333. N6-acetyllysine occurs at positions 340 and 375. Cys382 functions as the Proton donor/acceptor in the catalytic mechanism.

This sequence belongs to the thiolase-like superfamily. Thiolase family. Homotetramer. Interacts with BNIP3.

Its subcellular location is the mitochondrion. The enzyme catalyses an acyl-CoA + acetyl-CoA = a 3-oxoacyl-CoA + CoA. It catalyses the reaction 2 acetyl-CoA = acetoacetyl-CoA + CoA. The catalysed reaction is acetyl-CoA + H2O = acetate + CoA + H(+). It carries out the reaction propanoyl-CoA + H2O = propanoate + CoA + H(+). The enzyme catalyses butanoyl-CoA + H2O = butanoate + CoA + H(+). It catalyses the reaction hexanoyl-CoA + H2O = hexanoate + CoA + H(+). The catalysed reaction is octanoyl-CoA + H2O = octanoate + CoA + H(+). It carries out the reaction decanoyl-CoA + H2O = decanoate + CoA + H(+). The enzyme catalyses dodecanoyl-CoA + H2O = dodecanoate + CoA + H(+). It catalyses the reaction tetradecanoyl-CoA + H2O = tetradecanoate + CoA + H(+). The catalysed reaction is hexadecanoyl-CoA + H2O = hexadecanoate + CoA + H(+). It participates in lipid metabolism; fatty acid beta-oxidation. Its function is as follows. In the production of energy from fats, this is one of the enzymes that catalyzes the last step of the mitochondrial beta-oxidation pathway, an aerobic process breaking down fatty acids into acetyl-CoA. Using free coenzyme A/CoA, catalyzes the thiolytic cleavage of medium- to long-chain unbranched 3-oxoacyl-CoAs into acetyl-CoA and a fatty acyl-CoA shortened by two carbon atoms. Also catalyzes the condensation of two acetyl-CoA molecules into acetoacetyl-CoA and could be involved in the production of ketone bodies. Also displays hydrolase activity on various fatty acyl-CoAs. Thereby, could be responsible for the production of acetate in a side reaction to beta-oxidation. Abolishes BNIP3-mediated apoptosis and mitochondrial damage. The protein is 3-ketoacyl-CoA thiolase, mitochondrial (ACAA2) of Bos taurus (Bovine).